A 165-amino-acid polypeptide reads, in one-letter code: Thiol peroxidase (165 aa).

The Thioredoxin domain maps to 17 to 165; that stretch reads PQVGEIVENF…NYEAALAVLA (149 aa). The active-site Cysteine sulfenic acid (-SOH) intermediate is the cysteine 59. An intrachain disulfide couples cysteine 59 to cysteine 93.

This sequence belongs to the peroxiredoxin family. Tpx subfamily. In terms of assembly, homodimer.

It catalyses the reaction a hydroperoxide + [thioredoxin]-dithiol = an alcohol + [thioredoxin]-disulfide + H2O. Functionally, thiol-specific peroxidase that catalyzes the reduction of hydrogen peroxide and organic hydroperoxides to water and alcohols, respectively. Plays a role in cell protection against oxidative stress by detoxifying peroxides. This is Thiol peroxidase from Haemophilus influenzae (strain ATCC 51907 / DSM 11121 / KW20 / Rd).